Consider the following 295-residue polypeptide: Probable protein phosphatase 2C 54 (295 aa).

In terms of domain architecture, PPM-type phosphatase spans 78–289 (GHGVVSVMGR…ENINVIVIDL (212 aa)). Mn(2+) is bound by residues Asp112, Gly113, Asp228, and Glu280.

Belongs to the PP2C family. It depends on Mg(2+) as a cofactor. Mn(2+) serves as cofactor.

It catalyses the reaction O-phospho-L-seryl-[protein] + H2O = L-seryl-[protein] + phosphate. The enzyme catalyses O-phospho-L-threonyl-[protein] + H2O = L-threonyl-[protein] + phosphate. The protein is Probable protein phosphatase 2C 54 of Arabidopsis thaliana (Mouse-ear cress).